The following is a 440-amino-acid chain: Eukaryotic translation initiation factor 3 subunit E (440 aa).

The region spanning Val-219–Thr-392 is the PCI domain.

Belongs to the eIF-3 subunit E family. In terms of assembly, component of the eukaryotic translation initiation factor 3 (eIF-3) complex.

The protein localises to the cytoplasm. In terms of biological role, component of the eukaryotic translation initiation factor 3 (eIF-3) complex, which is involved in protein synthesis of a specialized repertoire of mRNAs and, together with other initiation factors, stimulates binding of mRNA and methionyl-tRNAi to the 40S ribosome. The eIF-3 complex specifically targets and initiates translation of a subset of mRNAs involved in cell proliferation. The chain is Eukaryotic translation initiation factor 3 subunit E from Brugia malayi (Filarial nematode worm).